We begin with the raw amino-acid sequence, 209 residues long: Transcription factor atf31 (209 aa).

Residues 90 to 103 (SKSPSIISEASHNS) are compositionally biased toward polar residues. A disordered region spans residues 90 to 133 (SKSPSIISEASHNSPSRELDDSGDENTSKLTGTKQSMLKARNRQ). The bZIP domain occupies 121-184 (GTKQSMLKAR…IKLRTLVFAH (64 aa)). Residues 123–161 (KQSMLKARNRQAAQKCRIKKKKYLQTLQDQVNYYTSENK) form a basic motif region. A leucine-zipper region spans residues 163-177 (LLQSANDLREEIIKL).

Belongs to the bZIP family.

It localises to the nucleus. In Schizosaccharomyces pombe (strain 972 / ATCC 24843) (Fission yeast), this protein is Transcription factor atf31 (atf31).